A 144-amino-acid polypeptide reads, in one-letter code: Large ribosomal subunit protein uL13 (144 aa).

It belongs to the universal ribosomal protein uL13 family. In terms of assembly, part of the 50S ribosomal subunit.

Its function is as follows. This protein is one of the early assembly proteins of the 50S ribosomal subunit, although it is not seen to bind rRNA by itself. It is important during the early stages of 50S assembly. This is Large ribosomal subunit protein uL13 from Blochmanniella pennsylvanica (strain BPEN).